We begin with the raw amino-acid sequence, 1103 residues long: DNA polymerase delta catalytic subunit (1103 aa).

The tract at residues 1-29 is disordered; that stretch reads MDFKRRQGPGPGVPPKRARGGLWDEDEPS. The Nuclear localization signal motif lies at 4-19; that stretch reads KRRQGPGPGVPPKRAR. Residue Arg19 is modified to Omega-N-methylarginine. Lys570 is covalently cross-linked (Glycyl lysine isopeptide (Lys-Gly) (interchain with G-Cter in SUMO2)). Zn(2+) contacts are provided by Cys1008, Cys1011, Cys1022, and Cys1025. Residues 1008-1025 form a CysA-type zinc finger; sequence CIGCRSVINHQGAVCEFC. The [4Fe-4S] cluster site is built by Cys1054, Cys1057, Cys1067, and Cys1072. Positions 1054-1072 match the CysB motif motif; sequence CQRCQGSLHEDVICTSRDC.

The protein belongs to the DNA polymerase type-B family. Component of the tetrameric DNA polymerase delta complex (Pol-delta4), which consists of POLD1/p125, POLD2/p50, POLD3/p66/p68 and POLD4/p12, with POLD1 bearing both DNA polymerase and 3' to 5' proofreading exonuclease activities. Within Pol-delta4, directly interacts with POLD2 and POLD4. Following genotoxic stress by DNA-damaging agents, such as ultraviolet light and methyl methanesulfonate, or by replication stress induced by treatment with hydroxyurea or aphidicolin, Pol-delta4 is converted into a trimeric form of the complex (Pol-delta3) by POLD4 degradation. Pol-delta3 is the major form at S phase replication sites and DNA damage sites. POLD1 displays different catalytic properties depending upon the complex it is found in. It exhibits higher proofreading activity and fidelity than Pol-delta4, making it particularly well suited to respond to DNA damage. Directly interacts with PCNA, as do POLD3 and POLD4; this interaction stimulates Pol-delta4 polymerase activity. As POLD2 and POLD4, directly interacts with WRNIP1; this interaction stimulates DNA polymerase delta-mediated DNA synthesis, independently of the presence of PCNA. This stimulation may be due predominantly to an increase of initiation frequency and also to increased processivity. Also observed as a dimeric complex with POLD2 (Pol-delta2). Pol-delta2 is relatively insensitive to the PCNA stimulation (2-5-fold) compared to Pol-delta4 that is stimulated by over 50-fold. The DNA polymerase delta complex interacts with POLDIP2; this interaction is probably mediated through direct binding to POLD2. Interacts with CIAO1. Interacts with POLDIP2. Interacts with RFC1. The cofactor is [4Fe-4S] cluster.

The protein resides in the nucleus. It catalyses the reaction DNA(n) + a 2'-deoxyribonucleoside 5'-triphosphate = DNA(n+1) + diphosphate. With respect to regulation, regulated by alteration of quaternary structure. Exhibits burst rates of DNA synthesis are about 5 times faster in the presence of POLD4 (Pol-delta4 complex) than in its absence (Pol-delta3 complex), while the affinity of the enzyme for its DNA and dNTP substrates appears unchanged. The Pol-delta3 complex is more likely to proofread DNA synthesis because it cleaves single-stranded DNA twice as fast and transfers mismatched DNA from the polymerase to the exonuclease sites 9 times faster compared to the Pol-delta3 complex. Pol-delta3 also extends mismatched primers 3 times more slowly in the absence of POLD4. The conversion of Pol-delta4 into Pol-delta3 is induced by genotoxic stress or by replication stress leading POLD4 degradation. Stimulated in the presence of PCNA. This stimulation is further increased in the presence of KCTD13/PDIP1, most probably via direct interaction between KCTD13 and POLD2. Its function is as follows. As the catalytic component of the trimeric (Pol-delta3 complex) and tetrameric DNA polymerase delta complexes (Pol-delta4 complex), plays a crucial role in high fidelity genome replication, including in lagging strand synthesis, and repair. Exhibits both DNA polymerase and 3'- to 5'-exonuclease activities. Requires the presence of accessory proteins POLD2, POLD3 and POLD4 for full activity. Depending upon the absence (Pol-delta3) or the presence of POLD4 (Pol-delta4), displays differences in catalytic activity. Most notably, expresses higher proofreading activity in the context of Pol-delta3 compared with that of Pol-delta4. Although both Pol-delta3 and Pol-delta4 process Okazaki fragments in vitro, Pol-delta3 may be better suited to fulfill this task, exhibiting near-absence of strand displacement activity compared to Pol-delta4 and stalling on encounter with the 5'-blocking oligonucleotides. Pol-delta3 idling process may avoid the formation of a gap, while maintaining a nick that can be readily ligated. Along with DNA polymerase kappa, DNA polymerase delta carries out approximately half of nucleotide excision repair (NER) synthesis following UV irradiation. Under conditions of DNA replication stress, in the presence of POLD3 and POLD4, may catalyze the repair of broken replication forks through break-induced replication (BIR). Involved in the translesion synthesis (TLS) of templates carrying O6-methylguanine, 8oxoG or abasic sites. This chain is DNA polymerase delta catalytic subunit (POLD1), found in Mesocricetus auratus (Golden hamster).